We begin with the raw amino-acid sequence, 166 residues long: NAD(P)H-quinone oxidoreductase subunit I, chloroplastic (166 aa).

4Fe-4S ferredoxin-type domains are found at residues 55 to 84 (GRIHFEFDKCIACEVCVRVCPMDLPVVDWK) and 95 to 124 (LNYSIDFGICIFCGNCVEYCPTNCLSMTEE). [4Fe-4S] cluster-binding residues include Cys-64, Cys-67, Cys-70, Cys-74, Cys-104, Cys-107, Cys-110, and Cys-114.

It belongs to the complex I 23 kDa subunit family. In terms of assembly, NDH is composed of at least 16 different subunits, 5 of which are encoded in the nucleus. [4Fe-4S] cluster serves as cofactor.

The protein localises to the plastid. It localises to the chloroplast thylakoid membrane. The enzyme catalyses a plastoquinone + NADH + (n+1) H(+)(in) = a plastoquinol + NAD(+) + n H(+)(out). The catalysed reaction is a plastoquinone + NADPH + (n+1) H(+)(in) = a plastoquinol + NADP(+) + n H(+)(out). Its function is as follows. NDH shuttles electrons from NAD(P)H:plastoquinone, via FMN and iron-sulfur (Fe-S) centers, to quinones in the photosynthetic chain and possibly in a chloroplast respiratory chain. The immediate electron acceptor for the enzyme in this species is believed to be plastoquinone. Couples the redox reaction to proton translocation, and thus conserves the redox energy in a proton gradient. The sequence is that of NAD(P)H-quinone oxidoreductase subunit I, chloroplastic from Steiractinia sodiroi.